Here is a 605-residue protein sequence, read N- to C-terminus: Elongation factor 4 (605 aa).

A tr-type G domain is found at 11 to 193 (KNIRNFSIIA…TLVDVIPAPT (183 aa)). GTP is bound by residues 23–28 (DHGKST) and 140–143 (NKID).

The protein belongs to the TRAFAC class translation factor GTPase superfamily. Classic translation factor GTPase family. LepA subfamily.

Its subcellular location is the cell inner membrane. It carries out the reaction GTP + H2O = GDP + phosphate + H(+). Functionally, required for accurate and efficient protein synthesis under certain stress conditions. May act as a fidelity factor of the translation reaction, by catalyzing a one-codon backward translocation of tRNAs on improperly translocated ribosomes. Back-translocation proceeds from a post-translocation (POST) complex to a pre-translocation (PRE) complex, thus giving elongation factor G a second chance to translocate the tRNAs correctly. Binds to ribosomes in a GTP-dependent manner. The sequence is that of Elongation factor 4 from Acinetobacter baumannii (strain SDF).